We begin with the raw amino-acid sequence, 119 residues long: Protein TusC (119 aa).

It belongs to the DsrF/TusC family. As to quaternary structure, heterohexamer, formed by a dimer of trimers. The hexameric TusBCD complex contains 2 copies each of TusB, TusC and TusD. The TusBCD complex interacts with TusE.

It is found in the cytoplasm. In terms of biological role, part of a sulfur-relay system required for 2-thiolation of 5-methylaminomethyl-2-thiouridine (mnm(5)s(2)U) at tRNA wobble positions. This Serratia proteamaculans (strain 568) protein is Protein TusC.